Here is a 297-residue protein sequence, read N- to C-terminus: T-cell leukemia homeobox protein 3 (297 aa).

Positions 1–68 (MEPAAGAQGP…LGGPRGGAPY (68 aa)) are disordered. Over residues 32–52 (APPPPPPPPPPPPPPPPPPRG) the composition is skewed to pro residues. The homeobox DNA-binding region spans 172-231 (RKKPRTSFSRVQICELEKRFHRQKYLASAERAALAKSLKMTDAQVKTWFQNRRTKWRRQT).

Expression is restricted to neurons in the peripheral and central nervous system.

The protein resides in the nucleus. Seems to be involved in the development of cranial sensory innervation from peripheral ganglia. This Gallus gallus (Chicken) protein is T-cell leukemia homeobox protein 3 (TLX3).